We begin with the raw amino-acid sequence, 232 residues long: A-type ATP synthase subunit D (232 aa).

A disordered region spans residues 200–232 (KKIKNKKEAEEEDEDEDESEMTDETVVQTPADD). Residues 209–222 (EEEDEDEDESEMTD) are compositionally biased toward acidic residues.

The protein belongs to the V-ATPase D subunit family. In terms of assembly, has multiple subunits with at least A(3), B(3), C, D, E, F, H, I and proteolipid K(x).

It localises to the cell membrane. In terms of biological role, component of the A-type ATP synthase that produces ATP from ADP in the presence of a proton gradient across the membrane. The sequence is that of A-type ATP synthase subunit D from Haloquadratum walsbyi (strain DSM 16790 / HBSQ001).